The sequence spans 121 residues: Large ribosomal subunit protein eL18 (121 aa).

This sequence belongs to the eukaryotic ribosomal protein eL18 family.

In Methanoregula boonei (strain DSM 21154 / JCM 14090 / 6A8), this protein is Large ribosomal subunit protein eL18.